The sequence spans 187 residues: UPF0301 protein VC_0467 (187 aa).

It belongs to the UPF0301 (AlgH) family.

This Vibrio cholerae serotype O1 (strain ATCC 39315 / El Tor Inaba N16961) protein is UPF0301 protein VC_0467.